Here is a 410-residue protein sequence, read N- to C-terminus: Translation initiation factor 2 subunit gamma (410 aa).

One can recognise a tr-type G domain in the interval 6–203 (QSEVNIGMVG…AIQDFIPTPE (198 aa)). Residues 15–22 (GHVDHGKT) form a G1 region. The Mg(2+) site is built by Asp18, Thr22, Gly43, and Ser45. Position 18-23 (18-23 (DHGKTS)) interacts with GTP. The segment at 43-47 (GISIR) is G2. Zn(2+)-binding residues include Cys58, Cys61, Cys73, and Cys76. The segment at 90–93 (DAPG) is G3. Residues 146–149 (NKID) and 181–183 (SAH) contribute to the GTP site. The interval 146-149 (NKID) is G4. The interval 181-183 (SAH) is G5.

Belongs to the TRAFAC class translation factor GTPase superfamily. Classic translation factor GTPase family. EIF2G subfamily. As to quaternary structure, heterotrimer composed of an alpha, a beta and a gamma chain. It depends on Mg(2+) as a cofactor.

The catalysed reaction is GTP + H2O = GDP + phosphate + H(+). In terms of biological role, eIF-2 functions in the early steps of protein synthesis by forming a ternary complex with GTP and initiator tRNA. The sequence is that of Translation initiation factor 2 subunit gamma from Methanococcus maripaludis (strain DSM 14266 / JCM 13030 / NBRC 101832 / S2 / LL).